Consider the following 481-residue polypeptide: Vanillin dehydrogenase (481 aa).

228–233 (GSTHVG) is an NAD(+) binding site. Residues Glu250 and Cys284 contribute to the active site.

This sequence belongs to the aldehyde dehydrogenase family.

It carries out the reaction vanillin + NAD(+) + H2O = vanillate + NADH + 2 H(+). Catalyzes the NAD-dependent oxidation of vanillin to vanillic acid. The chain is Vanillin dehydrogenase (vdh) from Pseudomonas sp. (strain HR199 / DSM 7063).